A 610-amino-acid polypeptide reads, in one-letter code: Chitinase 63 (610 aa).

A signal peptide spans 1-30 (MRFRHKAAALAATLALPLAGLVGLASPAQA). The CBM2 domain maps to 31–134 (ATSATATFQK…KINGGSCDGS (104 aa)). Disordered regions lie at residues 125–153 (KINGGSCDGSSVPGDEAPSAPGTPTASNI) and 208–239 (ARDTGDQTGPASGSVKVTTTGGDGGEPNPNPG). The 86-residue stretch at 144–229 (APGTPTASNI…GSVKVTTTGG (86 aa)) folds into the Fibronectin type-III domain. Over residues 213–224 (DQTGPASGSVKV) the composition is skewed to polar residues. Residues 241 to 610 (EVKMGYFTNW…LVSAIDSGLK (370 aa)) enclose the GH18 domain. Chitin is bound by residues 313–314 (DQ) and 340–343 (GGWT). Glu383 serves as the catalytic Proton donor. Chitin-binding positions include Tyr384, 450–453 (MTYD), and Trp590.

The protein belongs to the glycosyl hydrolase 18 family. Chitinase class II subfamily.

The enzyme catalyses Random endo-hydrolysis of N-acetyl-beta-D-glucosaminide (1-&gt;4)-beta-linkages in chitin and chitodextrins.. This Streptomyces plicatus protein is Chitinase 63 (chtA).